We begin with the raw amino-acid sequence, 822 residues long: Ras GTPase-activating-like protein rgaA (822 aa).

Residues 1 to 36 (MNKEEYSDISDSESEEVHETNNHNEHEHEEEDDTPE) are disordered. A compositionally biased stretch (basic and acidic residues) spans 15 to 27 (EEVHETNNHNEHE). Residues 104–152 (EDKESDWIAEIQELKRNLVSEVRRNHTLERDLNRLDKRIALLIKNRGNI) are a coiled coil. A required for interaction to rac1A region spans residues 161 to 822 (GLKAPKHKGD…IHLLNKLFLY (662 aa)). Residues 234-477 (FLLLSLYRLS…GDIKNYLQEI (244 aa)) enclose the Ras-GAP domain.

In terms of assembly, heterotetramer. Quaternary complex with activated rac1A, ctxA and ctxB. Interacts directly with rac1A and ctxA. Preferentially interacts with activated forms of rac1A, rac1B and rac1C. Interacts with racE.

Its subcellular location is the cytoplasm. It localises to the cell cortex. The protein resides in the cleavage furrow. Part of signaling pathway that is required for completion of cytokinesis. gapA and rgaA control cortexillin localization to the cleavage furrow and hence may be involved in cleavage of the midbody in the final stage of cytokinesis by regulating the actin cytoskeleton. Forms a complex by linking activated rac1A to ctxA. Assembly of this complex is necessary for the recruitment of cortexillin to the midzone of a dividing cell. Overexpression leads to the suppression of the formation of cellular projections containing F-actin and to a defect in cytokinesis. The protein is Ras GTPase-activating-like protein rgaA (rgaA) of Dictyostelium discoideum (Social amoeba).